A 185-amino-acid chain; its full sequence is MIEASKLRAGMTFESEGKLIRVLEASHHKPGKGNTIMRMKLRDVRTGSTFDTTYRPDEKFEQAIIETVPAQYLYKMDDTAYFMNTETYDQYEIPVVNVEQELLYILENSDVKIQFYGSEVIGVTVPTTVELTVTETQPSIKGATVTGSGKPATLETGLVVNVPDFIEAGQKLVINTAEGTYVSRA.

The protein belongs to the elongation factor P family.

The protein localises to the cytoplasm. It functions in the pathway protein biosynthesis; polypeptide chain elongation. Involved in peptide bond synthesis. Stimulates efficient translation and peptide-bond synthesis on native or reconstituted 70S ribosomes in vitro. Probably functions indirectly by altering the affinity of the ribosome for aminoacyl-tRNA, thus increasing their reactivity as acceptors for peptidyl transferase. This is Elongation factor P from Streptococcus uberis (strain ATCC BAA-854 / 0140J).